Here is a 314-residue protein sequence, read N- to C-terminus: Methionyl-tRNA formyltransferase (314 aa).

110–113 (SLLP) is a binding site for (6S)-5,6,7,8-tetrahydrofolate.

The protein belongs to the Fmt family.

It catalyses the reaction L-methionyl-tRNA(fMet) + (6R)-10-formyltetrahydrofolate = N-formyl-L-methionyl-tRNA(fMet) + (6S)-5,6,7,8-tetrahydrofolate + H(+). In terms of biological role, attaches a formyl group to the free amino group of methionyl-tRNA(fMet). The formyl group appears to play a dual role in the initiator identity of N-formylmethionyl-tRNA by promoting its recognition by IF2 and preventing the misappropriation of this tRNA by the elongation apparatus. The sequence is that of Methionyl-tRNA formyltransferase from Bacillus thuringiensis subsp. konkukian (strain 97-27).